A 496-amino-acid chain; its full sequence is Gamma-aminobutyric acid receptor subunit beta-like (496 aa).

The or 27 signal peptide spans 1-20 (MTCFTRVGVSCGLFFFLLGA). Over 21 to 258 (QLQLIRCIRK…SFKLQRNIGY (238 aa)) the chain is Extracellular. Residues Asn39 and Asn189 are each glycosylated (N-linked (GlcNAc...) asparagine). Residues Cys176 and Cys190 are joined by a disulfide bond. The next 3 helical transmembrane spans lie at 259–280 (FVFQ…SFWI), 285–306 (TSAR…STGV), and 318–342 (AIDI…AVNY). Topologically, residues 343-472 (TYWGKRAKKK…KIKDVNIIDK (130 aa)) are cytoplasmic. Residues 473-494 (YSRMIFPISFLAFNLGYWLFYI) traverse the membrane as a helical segment.

It belongs to the ligand-gated ion channel (TC 1.A.9) family. Gamma-aminobutyric acid receptor (TC 1.A.9.5) subfamily. In terms of assembly, generally pentameric. There are five types of GABA(A) receptor chains: alpha, beta, gamma, delta, and rho. Interacts with Grd (alpha chain).

It is found in the postsynaptic cell membrane. It localises to the cell membrane. Functionally, GABA, an inhibitory neurotransmitter, mediates neuronal inhibition by binding to the GABA receptor and opening an integral chloride channel. Combines with the ligand-gated ion channel subunit GRD to form cation-selective GABA-gated ion channels when coexpressed in Xenopus laevis oocytes. This is Gamma-aminobutyric acid receptor subunit beta-like (Lcch3) from Drosophila melanogaster (Fruit fly).